The sequence spans 454 residues: Alpha-1,3-mannosyl-glycoprotein 4-beta-N-acetylglucosaminyltransferase C (454 aa).

The Cytoplasmic portion of the chain corresponds to 1 to 6; that stretch reads MRCHLK. The helical; Signal-anchor for type II membrane protein transmembrane segment at 7 to 24 threads the bilayer; that stretch reads KWVVVAAGLSILTSLYVY. At 25-454 the chain is on the lumenal side; sequence MQRAQSGNLK…VWTVKEDKTI (430 aa). 2 N-linked (GlcNAc...) asparagine glycosylation sites follow: N58 and N189.

Belongs to the glycosyltransferase 54 family. A divalent metal cation serves as cofactor.

The protein resides in the golgi apparatus membrane. The enzyme catalyses N(4)-{beta-D-GlcNAc-(1-&gt;2)-alpha-D-Man-(1-&gt;3)-[beta-D-GlcNAc-(1-&gt;2)-alpha-D-Man-(1-&gt;6)]-beta-D-Man-(1-&gt;4)-beta-D-GlcNAc-(1-&gt;4)-beta-D-GlcNAc}-L-asparaginyl-[protein] + UDP-N-acetyl-alpha-D-glucosamine = N(4)-{beta-D-GlcNAc-(1-&gt;2)-[beta-D-GlcNAc-(1-&gt;4)]-alpha-D-Man-(1-&gt;3)-[beta-D-GlcNAc-(1-&gt;2)-alpha-D-Man-(1-&gt;6)]-beta-D-Man-(1-&gt;4)-beta-D-GlcNAc-(1-&gt;4)-beta-D-GlcNAc}-L-asparaginyl-[protein] + UDP + H(+). Its pathway is protein modification; protein glycosylation. Glycosyltransferase that participates in the transfer of N-acetylglucosamine (GlcNAc) to the core mannose residues of N-linked glycans. Catalyzes the formation of the GlcNAcbeta1-4 branch on the GlcNAcbeta1-2Manalpha1-3 arm of the core structure of N-linked glycans. The polypeptide is Alpha-1,3-mannosyl-glycoprotein 4-beta-N-acetylglucosaminyltransferase C (mgat4c) (Danio rerio (Zebrafish)).